A 393-amino-acid chain; its full sequence is Argininosuccinate synthase (393 aa).

ATP contacts are provided by residues 7–15 (AYSGGLDTS) and alanine 34. L-citrulline is bound by residues tyrosine 85 and serine 90. Residue glycine 115 coordinates ATP. Threonine 117, asparagine 121, and aspartate 122 together coordinate L-aspartate. Residue asparagine 121 coordinates L-citrulline. L-citrulline contacts are provided by arginine 125, serine 176, serine 185, glutamate 261, and tyrosine 273.

It belongs to the argininosuccinate synthase family. Type 1 subfamily. In terms of assembly, homotetramer.

Its subcellular location is the cytoplasm. The enzyme catalyses L-citrulline + L-aspartate + ATP = 2-(N(omega)-L-arginino)succinate + AMP + diphosphate + H(+). The protein operates within amino-acid biosynthesis; L-arginine biosynthesis; L-arginine from L-ornithine and carbamoyl phosphate: step 2/3. The polypeptide is Argininosuccinate synthase (Ehrlichia canis (strain Jake)).